Here is a 303-residue protein sequence, read N- to C-terminus: Methionyl-tRNA formyltransferase (303 aa).

Position 106–109 (Ser-106–Pro-109) interacts with (6S)-5,6,7,8-tetrahydrofolate.

Belongs to the Fmt family.

The catalysed reaction is L-methionyl-tRNA(fMet) + (6R)-10-formyltetrahydrofolate = N-formyl-L-methionyl-tRNA(fMet) + (6S)-5,6,7,8-tetrahydrofolate + H(+). Attaches a formyl group to the free amino group of methionyl-tRNA(fMet). The formyl group appears to play a dual role in the initiator identity of N-formylmethionyl-tRNA by promoting its recognition by IF2 and preventing the misappropriation of this tRNA by the elongation apparatus. This chain is Methionyl-tRNA formyltransferase, found in Thermosipho melanesiensis (strain DSM 12029 / CIP 104789 / BI429).